A 528-amino-acid chain; its full sequence is Lysine--tRNA ligase (528 aa).

The 'HIGH' region signature appears at 36-44 (PSGTVHIGN). A 'KMSKS' region motif is present at residues 287–291 (KMSSS).

This sequence belongs to the class-I aminoacyl-tRNA synthetase family.

The protein resides in the cytoplasm. The enzyme catalyses tRNA(Lys) + L-lysine + ATP = L-lysyl-tRNA(Lys) + AMP + diphosphate. This is Lysine--tRNA ligase (lysS) from Treponema pallidum (strain Nichols).